A 367-amino-acid polypeptide reads, in one-letter code: Cytochrome b (367 aa).

Transmembrane regions (helical) follow at residues methionine 20–methionine 40, tryptophan 64–isoleucine 85, tryptophan 101–leucine 121, and phenylalanine 166–isoleucine 186. Heme b contacts are provided by histidine 70 and histidine 84. Residues histidine 170 and histidine 184 each coordinate heme b. An a ubiquinone-binding site is contributed by histidine 189. 4 helical membrane passes run isoleucine 214 to serine 234, leucine 276 to serine 296, isoleucine 308 to alanine 328, and tyrosine 335 to methionine 355.

Belongs to the cytochrome b family. In terms of assembly, the main subunits of complex b-c1 are: cytochrome b, cytochrome c1 and the Rieske protein. Heme b is required as a cofactor.

It is found in the mitochondrion inner membrane. In terms of biological role, component of the ubiquinol-cytochrome c reductase complex (complex III or cytochrome b-c1 complex) that is part of the mitochondrial respiratory chain. The b-c1 complex mediates electron transfer from ubiquinol to cytochrome c. Contributes to the generation of a proton gradient across the mitochondrial membrane that is then used for ATP synthesis. The sequence is that of Cytochrome b (MT-CYB) from Albinaria caerulea (Land snail).